Here is a 117-residue protein sequence, read N- to C-terminus: MAIINRSKLTQTTMIKQILKRCSSLGKKQSSEYNDTHEHDGDSLPLDVPKGHFVVYVGGNRVRYVLPISFLTRPEFQLLLQQAEEEFGFDHNMGLTIPCEEVAFKSLITSMLQPTYI.

The protein belongs to the ARG7 family. As to expression, expressed in trichomes. Hardly observed in leaves.

It is found in the cell membrane. Functionally, provide a mechanistic link between auxin and plasma membrane H(+)-ATPases (PM H(+)-ATPases, e.g. AHA1 and AHA2), and triggers PM H(+)-ATPases activity by promoting phosphorylation of their C-terminal autoinhibitory domain as a result of PP2C-D subfamily of type 2C phosphatases inhibition, thus leading to the acidification of the apoplast and the facilitation of solutes and water uptake to drive cell expansion. Triggers plant growth probably by promoting cell elongation. Regulates branch angles and bending. The chain is Protein SMALL AUXIN UP-REGULATED RNA 54 from Arabidopsis thaliana (Mouse-ear cress).